Consider the following 1516-residue polypeptide: Myosin-52 (1516 aa).

Residues 7 to 62 (YKGLQCWIPDEQSQWIPGSIKDCRVEGEKAFLTVQDENENETVITVKPDDLNYEGR) enclose the Myosin N-terminal SH3-like domain. Residues 73–766 (SDADDLTDLS…VTPLLESARD (694 aa)) form the Myosin motor domain. 167–174 (GESGAGKT) contacts ATP. The segment at 647 to 669 (LVSLMSTINETNAHYIRCIKPNE) is actin-binding. 5 consecutive IQ domains span residues 793-813 (RKRVRSFQAVAHGFLSRRHTE), 818-838 (SSNIIKLQSLWRTALKRKEFI), 840-865 (TKNSILKVQSIIRGFLLRQTLEEKTK), 866-886 (HDATLIIQSLWLTFKAHKHYK), and 888-917 (LQYYAVRIQSLWRMKLAKRQLTELKIESTK). Positions 926-1034 (YRLESRLFEI…LKSQLKNYDM (109 aa)) form a coiled coil. Residues serine 1065 and serine 1072 each carry the phosphoserine modification. Residues 1163-1431 (ERYCVHTLEY…SELSKNIVAE (269 aa)) form the Dilute domain.

The protein belongs to the TRAFAC class myosin-kinesin ATPase superfamily. Myosin family.

It localises to the cytoplasm. Involved in cell wall deposition where it has a role in the localization of mok1. This Schizosaccharomyces pombe (strain 972 / ATCC 24843) (Fission yeast) protein is Myosin-52 (myo52).